We begin with the raw amino-acid sequence, 504 residues long: Lysine--tRNA ligase (504 aa).

Mg(2+) contacts are provided by glutamate 411 and glutamate 418.

This sequence belongs to the class-II aminoacyl-tRNA synthetase family. As to quaternary structure, homodimer. The cofactor is Mg(2+).

It localises to the cytoplasm. The catalysed reaction is tRNA(Lys) + L-lysine + ATP = L-lysyl-tRNA(Lys) + AMP + diphosphate. The chain is Lysine--tRNA ligase from Clostridium botulinum (strain Loch Maree / Type A3).